A 276-amino-acid polypeptide reads, in one-letter code: Tryptophan synthase alpha chain (276 aa).

Residues glutamate 46 and glutamate 57 each act as proton acceptor in the active site.

The protein belongs to the TrpA family. Tetramer of two alpha and two beta chains.

It catalyses the reaction (1S,2R)-1-C-(indol-3-yl)glycerol 3-phosphate + L-serine = D-glyceraldehyde 3-phosphate + L-tryptophan + H2O. It participates in amino-acid biosynthesis; L-tryptophan biosynthesis; L-tryptophan from chorismate: step 5/5. In terms of biological role, the alpha subunit is responsible for the aldol cleavage of indoleglycerol phosphate to indole and glyceraldehyde 3-phosphate. This Halobacterium salinarum (strain ATCC 29341 / DSM 671 / R1) protein is Tryptophan synthase alpha chain.